Consider the following 326-residue polypeptide: Aspartate carbamoyltransferase catalytic subunit (326 aa).

The carbamoyl phosphate site is built by arginine 58 and threonine 59. Lysine 86 serves as a coordination point for L-aspartate. Carbamoyl phosphate contacts are provided by arginine 108, histidine 141, and glutamine 144. L-aspartate is bound by residues arginine 181 and arginine 239. Carbamoyl phosphate-binding residues include glycine 280 and proline 281.

The protein belongs to the aspartate/ornithine carbamoyltransferase superfamily. ATCase family. Heterododecamer (2C3:3R2) of six catalytic PyrB chains organized as two trimers (C3), and six regulatory PyrI chains organized as three dimers (R2).

The enzyme catalyses carbamoyl phosphate + L-aspartate = N-carbamoyl-L-aspartate + phosphate + H(+). The protein operates within pyrimidine metabolism; UMP biosynthesis via de novo pathway; (S)-dihydroorotate from bicarbonate: step 2/3. Catalyzes the condensation of carbamoyl phosphate and aspartate to form carbamoyl aspartate and inorganic phosphate, the committed step in the de novo pyrimidine nucleotide biosynthesis pathway. This Synechococcus sp. (strain JA-3-3Ab) (Cyanobacteria bacterium Yellowstone A-Prime) protein is Aspartate carbamoyltransferase catalytic subunit.